The sequence spans 859 residues: Ubiquitin carboxyl-terminal hydrolase 23 (859 aa).

Residues 1–24 are compositionally biased toward polar residues; sequence MEVATSSTEITIQTDRDPSSNNNG. The segment at 1 to 26 is disordered; sequence MEVATSSTEITIQTDRDPSSNNNGSC. The region spanning 107–410 is the USP domain; sequence AGLQNLGNTC…KAYMLFYVRD (304 aa). The Nucleophile role is filled by Cys-116. His-369 (proton acceptor) is an active-site residue. 2 disordered regions span residues 722–749 and 822–859; these read MISSSDGAVTSDQQQPVGSSDLSEASQN and EESYRGPNPFQMLASKRQKETKKKWTQSITDAKTAYRI.

Belongs to the peptidase C19 family.

The catalysed reaction is Thiol-dependent hydrolysis of ester, thioester, amide, peptide and isopeptide bonds formed by the C-terminal Gly of ubiquitin (a 76-residue protein attached to proteins as an intracellular targeting signal).. Its function is as follows. Recognizes and hydrolyzes the peptide bond at the C-terminal Gly of ubiquitin. Involved in the processing of poly-ubiquitin precursors as well as that of ubiquitinated proteins. The protein is Ubiquitin carboxyl-terminal hydrolase 23 (UBP23) of Arabidopsis thaliana (Mouse-ear cress).